The following is a 181-amino-acid chain: Large ribosomal subunit protein uL5c (181 aa).

Belongs to the universal ribosomal protein uL5 family. Part of the 50S ribosomal subunit; contacts the 5S rRNA.

It is found in the plastid. It localises to the chloroplast. Its function is as follows. Binds 5S rRNA, forms part of the central protuberance of the 50S subunit. This is Large ribosomal subunit protein uL5c (rpl5) from Guillardia theta (Cryptophyte).